Reading from the N-terminus, the 248-residue chain is Phosphatidylglycerol--prolipoprotein diacylglyceryl transferase (248 aa).

3 helical membrane-spanning segments follow: residues 6 to 26 (FTLF…GMIL), 47 to 67 (NIAI…YVVF), and 84 to 104 (GGGL…YIYT). An a 1,2-diacyl-sn-glycero-3-phospho-(1'-sn-glycerol)-binding site is contributed by arginine 130. 2 consecutive transmembrane segments (helical) span residues 186-206 (GQVI…IEGL) and 218-238 (MAQV…VYLS).

This sequence belongs to the Lgt family.

Its subcellular location is the cell membrane. The enzyme catalyses L-cysteinyl-[prolipoprotein] + a 1,2-diacyl-sn-glycero-3-phospho-(1'-sn-glycerol) = an S-1,2-diacyl-sn-glyceryl-L-cysteinyl-[prolipoprotein] + sn-glycerol 1-phosphate + H(+). It functions in the pathway protein modification; lipoprotein biosynthesis (diacylglyceryl transfer). Its function is as follows. Catalyzes the transfer of the diacylglyceryl group from phosphatidylglycerol to the sulfhydryl group of the N-terminal cysteine of a prolipoprotein, the first step in the formation of mature lipoproteins. The protein is Phosphatidylglycerol--prolipoprotein diacylglyceryl transferase of Clostridioides difficile (strain 630) (Peptoclostridium difficile).